A 277-amino-acid chain; its full sequence is F420-dependent methylenetetrahydromethanopterin dehydrogenase (277 aa).

The disordered stretch occupies residues Glu249–Glu277.

This sequence belongs to the MTD family.

The catalysed reaction is 5,10-methylenetetrahydromethanopterin + oxidized coenzyme F420-(gamma-L-Glu)(n) + 2 H(+) = 5,10-methenyl-5,6,7,8-tetrahydromethanopterin + reduced coenzyme F420-(gamma-L-Glu)(n). It functions in the pathway one-carbon metabolism; methanogenesis from CO(2); 5,10-methylene-5,6,7,8-tetrahydromethanopterin from 5,10-methenyl-5,6,7,8-tetrahydromethanopterin (coenzyme F420 route): step 1/1. Catalyzes the reversible reduction of methenyl-H(4)MPT(+) to methylene-H(4)MPT. The polypeptide is F420-dependent methylenetetrahydromethanopterin dehydrogenase (Methanococcus aeolicus (strain ATCC BAA-1280 / DSM 17508 / OCM 812 / Nankai-3)).